Consider the following 479-residue polypeptide: Ribulose bisphosphate carboxylase large chain (479 aa).

A propeptide spanning residues 1–2 is cleaved from the precursor; that stretch reads MS. Pro-3 is modified (N-acetylproline). Position 14 is an N6,N6,N6-trimethyllysine (Lys-14). 2 residues coordinate substrate: Asn-123 and Thr-173. The active-site Proton acceptor is the Lys-175. Lys-177 lines the substrate pocket. Residues Lys-201, Asp-203, and Glu-204 each coordinate Mg(2+). Lys-201 carries the post-translational modification N6-carboxylysine. The Proton acceptor role is filled by His-294. Substrate contacts are provided by Arg-295, His-327, and Ser-379.

Belongs to the RuBisCO large chain family. Type I subfamily. Heterohexadecamer of 8 large chains and 8 small chains; disulfide-linked. The disulfide link is formed within the large subunit homodimers. Requires Mg(2+) as cofactor. Post-translationally, the disulfide bond which can form in the large chain dimeric partners within the hexadecamer appears to be associated with oxidative stress and protein turnover.

It localises to the plastid. Its subcellular location is the chloroplast. It catalyses the reaction 2 (2R)-3-phosphoglycerate + 2 H(+) = D-ribulose 1,5-bisphosphate + CO2 + H2O. The catalysed reaction is D-ribulose 1,5-bisphosphate + O2 = 2-phosphoglycolate + (2R)-3-phosphoglycerate + 2 H(+). Its function is as follows. RuBisCO catalyzes two reactions: the carboxylation of D-ribulose 1,5-bisphosphate, the primary event in carbon dioxide fixation, as well as the oxidative fragmentation of the pentose substrate in the photorespiration process. Both reactions occur simultaneously and in competition at the same active site. In Ananas comosus (Pineapple), this protein is Ribulose bisphosphate carboxylase large chain.